The chain runs to 317 residues: MARRSKGRFIDGIVLLDKATGMSSNFALQRVKRFFNANKAGHTGALDPLATGMLPVCLGEATKFSQHLLDSDKRYLVTAKLGQRTDTSDSDGEVVQTRPLEFTEAQLMSALEHFRGDTQQVPSMYSALKYQGQPLYKYAREGIEVPREARPITVFELNFISLEGDELTLDIHCSKGTYIRTIIDDLGEMLGCGAHVIMLRRTQVAHYPYDKMVTLEQLEALVAKAQEEQLDSSSLLDSLLLPMDTAVADFPEVNVPDASAAYLMQGQAVRVSGLVADKLVRITLGTERRFVGIGKMNEDGLLAPKRLVVIHDQAKAS.

D47 acts as the Nucleophile in catalysis.

Belongs to the pseudouridine synthase TruB family. Type 1 subfamily.

The catalysed reaction is uridine(55) in tRNA = pseudouridine(55) in tRNA. Its function is as follows. Responsible for synthesis of pseudouridine from uracil-55 in the psi GC loop of transfer RNAs. In Shewanella sp. (strain MR-7), this protein is tRNA pseudouridine synthase B.